The chain runs to 116 residues: Large ribosomal subunit protein bL19 (116 aa).

Belongs to the bacterial ribosomal protein bL19 family.

Functionally, this protein is located at the 30S-50S ribosomal subunit interface and may play a role in the structure and function of the aminoacyl-tRNA binding site. This chain is Large ribosomal subunit protein bL19, found in Pseudomonas putida (strain ATCC 700007 / DSM 6899 / JCM 31910 / BCRC 17059 / LMG 24140 / F1).